A 372-amino-acid polypeptide reads, in one-letter code: tRNA-specific 2-thiouridylase MnmA (372 aa).

ATP contacts are provided by residues 7-14 (GLSGGVDS) and M33. The tract at residues 104–106 (NPD) is interaction with target base in tRNA. C109 serves as the catalytic Nucleophile. Cysteines 109 and 202 form a disulfide. G134 provides a ligand contact to ATP. Positions 152-154 (KDQ) are interaction with tRNA. Catalysis depends on C202, which acts as the Cysteine persulfide intermediate. Positions 310–311 (RY) are interaction with tRNA.

Belongs to the MnmA/TRMU family.

Its subcellular location is the cytoplasm. It carries out the reaction S-sulfanyl-L-cysteinyl-[protein] + uridine(34) in tRNA + AH2 + ATP = 2-thiouridine(34) in tRNA + L-cysteinyl-[protein] + A + AMP + diphosphate + H(+). Catalyzes the 2-thiolation of uridine at the wobble position (U34) of tRNA, leading to the formation of s(2)U34. In Mesomycoplasma hyopneumoniae (strain 232) (Mycoplasma hyopneumoniae), this protein is tRNA-specific 2-thiouridylase MnmA.